The primary structure comprises 201 residues: Holliday junction branch migration complex subunit RuvA (201 aa).

The segment at methionine 1–serine 61 is domain I. The domain II stretch occupies residues threonine 62–leucine 140. Positions phenylalanine 141–glutamine 150 are flexible linker. The interval glutamate 151–lysine 201 is domain III.

The protein belongs to the RuvA family. Homotetramer. Forms an RuvA(8)-RuvB(12)-Holliday junction (HJ) complex. HJ DNA is sandwiched between 2 RuvA tetramers; dsDNA enters through RuvA and exits via RuvB. An RuvB hexamer assembles on each DNA strand where it exits the tetramer. Each RuvB hexamer is contacted by two RuvA subunits (via domain III) on 2 adjacent RuvB subunits; this complex drives branch migration. In the full resolvosome a probable DNA-RuvA(4)-RuvB(12)-RuvC(2) complex forms which resolves the HJ.

The protein localises to the cytoplasm. Its function is as follows. The RuvA-RuvB-RuvC complex processes Holliday junction (HJ) DNA during genetic recombination and DNA repair, while the RuvA-RuvB complex plays an important role in the rescue of blocked DNA replication forks via replication fork reversal (RFR). RuvA specifically binds to HJ cruciform DNA, conferring on it an open structure. The RuvB hexamer acts as an ATP-dependent pump, pulling dsDNA into and through the RuvAB complex. HJ branch migration allows RuvC to scan DNA until it finds its consensus sequence, where it cleaves and resolves the cruciform DNA. The protein is Holliday junction branch migration complex subunit RuvA of Bacillus velezensis (strain DSM 23117 / BGSC 10A6 / LMG 26770 / FZB42) (Bacillus amyloliquefaciens subsp. plantarum).